Reading from the N-terminus, the 681-residue chain is NADH-quinone oxidoreductase subunit G (681 aa).

Residues 1–78 form the 2Fe-2S ferredoxin-type domain; that stretch reads MIKLTIDGQE…GMVIHTDTPM (78 aa). Positions 34, 45, 48, and 62 each coordinate [2Fe-2S] cluster. A 4Fe-4S His(Cys)3-ligated-type domain is found at 78 to 117; that stretch reads MVKKAREGVMEFLLVNHPLDCPICDQGGECDLQDQAFRYG. [4Fe-4S] cluster is bound by residues histidine 94, cysteine 98, cysteine 101, cysteine 107, cysteine 146, cysteine 149, cysteine 152, and cysteine 196. One can recognise a 4Fe-4S Mo/W bis-MGD-type domain in the interval 215–271; sequence LRHTASIGVHDAEGSNIRIDSRGDEVMRVLPRVNEEINEEWLSDKNRFSYDGLKYQR.

It belongs to the complex I 75 kDa subunit family. [2Fe-2S] cluster serves as cofactor. It depends on [4Fe-4S] cluster as a cofactor.

It carries out the reaction a quinone + NADH + 5 H(+)(in) = a quinol + NAD(+) + 4 H(+)(out). In terms of biological role, NDH-1 shuttles electrons from NADH, via FMN and iron-sulfur (Fe-S) centers, to quinones in the respiratory chain. Couples the redox reaction to proton translocation (for every two electrons transferred, four hydrogen ions are translocated across the cytoplasmic membrane), and thus conserves the redox energy in a proton gradient. The protein is NADH-quinone oxidoreductase subunit G (nuoG) of Rickettsia bellii (strain RML369-C).